The following is a 352-amino-acid chain: MSATAAITTRHDWTLAEVRALFEQPFNDLLFQAQSVHRQHFDPNRVQVSTLLSIKTGACPEDCKYCPQSGHYNTGLDKEKLMEVEKVLQAAAEAKAIGSTRFCMGAAWKHPSAKDMPYVLKMVEGVKKLGLETCMTLGKLTQEQTQALAEAGLDYYNHNLDTSPEFYGNIITTRTYSERLQTLAYVREAGMKICSGGILGMGESVDDRAGLLIQLANLPEHPESVPINMLVKVKGTPLAEEKDVDPFDFIRTLAVARIMMPKSHVRLSAGREQMNEQMQALAFMAGANSIFYGEKLLTTANPQADKDMALFKRLGIKPEEREEHADEVHQAAIEQALVEQRDSKLFYNAASA.

One can recognise a Radical SAM core domain in the interval 44–262; that stretch reads NRVQVSTLLS…LAVARIMMPK (219 aa). Residues C59, C63, and C66 each contribute to the [4Fe-4S] cluster site. C103, C134, C194, and R266 together coordinate [2Fe-2S] cluster.

It belongs to the radical SAM superfamily. Biotin synthase family. Homodimer. The cofactor is [4Fe-4S] cluster. [2Fe-2S] cluster is required as a cofactor.

The enzyme catalyses (4R,5S)-dethiobiotin + (sulfur carrier)-SH + 2 reduced [2Fe-2S]-[ferredoxin] + 2 S-adenosyl-L-methionine = (sulfur carrier)-H + biotin + 2 5'-deoxyadenosine + 2 L-methionine + 2 oxidized [2Fe-2S]-[ferredoxin]. It participates in cofactor biosynthesis; biotin biosynthesis; biotin from 7,8-diaminononanoate: step 2/2. Its function is as follows. Catalyzes the conversion of dethiobiotin (DTB) to biotin by the insertion of a sulfur atom into dethiobiotin via a radical-based mechanism. The chain is Biotin synthase from Ectopseudomonas mendocina (strain ymp) (Pseudomonas mendocina).